We begin with the raw amino-acid sequence, 371 residues long: Chaperone protein DnaJ (371 aa).

The 65-residue stretch at glutamate 5–glycine 69 folds into the J domain. The segment at glycine 127–threonine 209 adopts a CR-type zinc-finger fold. Residues cysteine 140, cysteine 143, cysteine 157, cysteine 160, cysteine 183, cysteine 186, cysteine 197, and cysteine 200 each coordinate Zn(2+). CXXCXGXG motif repeat units lie at residues cysteine 140–glycine 147, cysteine 157–glycine 164, cysteine 183–glycine 190, and cysteine 197–glycine 204.

Belongs to the DnaJ family. Homodimer. It depends on Zn(2+) as a cofactor.

It is found in the cytoplasm. Participates actively in the response to hyperosmotic and heat shock by preventing the aggregation of stress-denatured proteins and by disaggregating proteins, also in an autonomous, DnaK-independent fashion. Unfolded proteins bind initially to DnaJ; upon interaction with the DnaJ-bound protein, DnaK hydrolyzes its bound ATP, resulting in the formation of a stable complex. GrpE releases ADP from DnaK; ATP binding to DnaK triggers the release of the substrate protein, thus completing the reaction cycle. Several rounds of ATP-dependent interactions between DnaJ, DnaK and GrpE are required for fully efficient folding. Also involved, together with DnaK and GrpE, in the DNA replication of plasmids through activation of initiation proteins. This chain is Chaperone protein DnaJ, found in Streptococcus agalactiae serotype Ia (strain ATCC 27591 / A909 / CDC SS700).